The chain runs to 698 residues: Vertnin (698 aa).

It belongs to the vertnin family.

It is found in the nucleus. In terms of biological role, acts as a transcription factor that regulates development of thoracic vertebrae. The chain is Vertnin (VRTN) from Sus scrofa (Pig).